We begin with the raw amino-acid sequence, 476 residues long: NAC domain-containing protein 86 (476 aa).

The 152-residue stretch at 6 to 157 (LPPGFRFHPT…AYALCRVFKK (152 aa)) folds into the NAC domain. Residues 105 to 163 (IGTKKTLVYYRGRAPHGIRTGWVMHEYRLDESECEPSAFGMQDAYALCRVFKKIVIEAK) mediate DNA binding.

Expressed in a few sieve element cells before enucleation and in phloem-pole pericycle cells.

The protein localises to the nucleus. Transcription factor directing sieve element enucleation and cytosol degradation. Not required for formation of lytic vacuoles. Regulates, with NAC045, the transcription of NEN1, NEN2, NEN3, NEN4, RTM1, RTM2, UBP16, PLDZETA, ABCB10 and At1g26450. This is NAC domain-containing protein 86 from Arabidopsis thaliana (Mouse-ear cress).